The chain runs to 380 residues: Alanine racemase (380 aa).

Residue Lys-39 is the Proton acceptor; specific for D-alanine of the active site. Position 39 is an N6-(pyridoxal phosphate)lysine (Lys-39). Position 137 (Arg-137) interacts with substrate. The active-site Proton acceptor; specific for L-alanine is the Tyr-263. Met-310 serves as a coordination point for substrate.

It belongs to the alanine racemase family. The cofactor is pyridoxal 5'-phosphate.

It catalyses the reaction L-alanine = D-alanine. Its pathway is amino-acid biosynthesis; D-alanine biosynthesis; D-alanine from L-alanine: step 1/1. In terms of biological role, catalyzes the interconversion of L-alanine and D-alanine. May also act on other amino acids. The sequence is that of Alanine racemase (alr) from Macrococcus caseolyticus (strain JCSC5402) (Macrococcoides caseolyticum).